A 255-amino-acid polypeptide reads, in one-letter code: 5'-nucleotidase SurE (255 aa).

Positions 8, 9, 39, and 95 each coordinate a divalent metal cation.

It belongs to the SurE nucleotidase family. The cofactor is a divalent metal cation.

It localises to the cytoplasm. It carries out the reaction a ribonucleoside 5'-phosphate + H2O = a ribonucleoside + phosphate. Its function is as follows. Nucleotidase that shows phosphatase activity on nucleoside 5'-monophosphates. The protein is 5'-nucleotidase SurE of Rubrivivax gelatinosus (strain NBRC 100245 / IL144).